Here is a 437-residue protein sequence, read N- to C-terminus: Glutamyl-tRNA reductase (437 aa).

Residues 46 to 49 (TCNR), Ser-111, 116 to 118 (ERE), and Gln-122 contribute to the substrate site. The active-site Nucleophile is Cys-47. An NADP(+)-binding site is contributed by 192 to 197 (GTGAYA). The interval 413–437 (PDVPEETAPSTRQDPSDTPRPRAVG) is disordered. Positions 426-437 (DPSDTPRPRAVG) are enriched in basic and acidic residues.

The protein belongs to the glutamyl-tRNA reductase family. In terms of assembly, homodimer.

The enzyme catalyses (S)-4-amino-5-oxopentanoate + tRNA(Glu) + NADP(+) = L-glutamyl-tRNA(Glu) + NADPH + H(+). Its pathway is porphyrin-containing compound metabolism; protoporphyrin-IX biosynthesis; 5-aminolevulinate from L-glutamyl-tRNA(Glu): step 1/2. Its function is as follows. Catalyzes the NADPH-dependent reduction of glutamyl-tRNA(Glu) to glutamate 1-semialdehyde (GSA). The protein is Glutamyl-tRNA reductase of Kocuria rhizophila (strain ATCC 9341 / DSM 348 / NBRC 103217 / DC2201).